A 485-amino-acid chain; its full sequence is Peroxisomal catalase (485 aa).

Catalysis depends on residues His-53 and Asn-126. Tyr-336 is a heme binding site.

The protein belongs to the catalase family. In terms of assembly, homotetramer. The cofactor is heme.

The protein localises to the peroxisome matrix. It carries out the reaction 2 H2O2 = O2 + 2 H2O. In terms of biological role, catalyzes the degradation of hydrogen peroxide (H(2)O(2)) generated by peroxisomal oxidases to water and oxygen, thereby protecting cells from the toxic effects of hydrogen peroxide. This chain is Peroxisomal catalase (CAT1), found in Candida albicans (strain SC5314 / ATCC MYA-2876) (Yeast).